A 472-amino-acid chain; its full sequence is Sarcalumenin (472 aa).

A signal peptide spans 1-20 (MKRLNLLCCCVASLLLLGTA). N-linked (GlcNAc...) asparagine glycosylation is present at L59. Residues 89 to 330 (ITSKPMVLFL…IENRMENKIA (242 aa)) enclose the Dynamin-type G domain. Residues 99–106 (GPWSVGKS) are G1 motif. Residues 127–128 (EP) form a G2 motif region. The G3 motif stretch occupies residues 189 to 192 (DTPG). Residues 254 to 257 (NKAD) form a G4 motif region. Residue L278 is a region of interest, G5 motif. Residues N280 and N388 are each glycosylated (N-linked (GlcNAc...) asparagine).

Belongs to the TRAFAC class dynamin-like GTPase superfamily. Dynamin/Fzo/YdjA family. Post-translationally, N-glycosylated.

The protein resides in the sarcoplasmic reticulum lumen. Its subcellular location is the sarcoplasmic reticulum membrane. The chain is Sarcalumenin (SRL) from Gallus gallus (Chicken).